We begin with the raw amino-acid sequence, 177 residues long: Putative pre-16S rRNA nuclease (177 aa).

Belongs to the YqgF nuclease family.

It localises to the cytoplasm. Could be a nuclease involved in processing of the 5'-end of pre-16S rRNA. The sequence is that of Putative pre-16S rRNA nuclease from Psychrobacter sp. (strain PRwf-1).